Here is a 497-residue protein sequence, read N- to C-terminus: C4-dicarboxylate transport protein (497 aa).

8 helical membrane-spanning segments follow: residues leucine 27–tyrosine 45, isoleucine 60–methionine 82, alanine 95–valine 117, isoleucine 168–valine 185, arginine 205–glycine 227, leucine 237–valine 259, isoleucine 348–isoleucine 370, and alanine 374–isoleucine 393. Residues alanine 466–leucine 497 form a disordered region. The segment covering glycine 475–proline 484 has biased composition (basic and acidic residues).

It belongs to the dicarboxylate/amino acid:cation symporter (DAACS) (TC 2.A.23) family.

The protein localises to the cell inner membrane. Responsible for the transport of dicarboxylates such as succinate, fumarate, and malate from the periplasm across the inner membrane. This transport system plays an essential role in the energy supply of tropical rhizobium-legume symbionts. In Sinorhizobium fredii (strain NBRC 101917 / NGR234), this protein is C4-dicarboxylate transport protein (dctA1).